The primary structure comprises 453 residues: Aryl hydrocarbon receptor nuclear translocator homolog (453 aa).

Residues 44 to 97 (FARENHSEIERRRRNKMTHYINELAEMVPQCASLGRKPDKLTILRMAVSHMKGI) enclose the bHLH domain. PAS domains follow at residues 115–193 (DQEL…LDLK) and 277–347 (ASMP…LSDQ). Positions 348-392 (PMRINIRVRTSTDYIPCTVSAYKFMNPYSEQFEYVVATHQIAPQE) constitute a PAC domain. A disordered region spans residues 410 to 453 (EFGELGGAPSAVDYGQSSSGGWRPEAQGAPQAQWQWDPMNGYNQ).

As to quaternary structure, interacts with hif-1. Heterodimer; efficient DNA binding requires dimerization with another bHLH protein. Forms a heterodimer with ahr-1; binds DNA as heterodimer. Forms a heterodimer with PAS domain-containing protein cky-1; binds DNA as heterodimer. Expressed in many cell types throughout development, including hypodermal cells, intestinal cells, pharyngeal cells, and neurons. Expressed in every cell during embryo.

It is found in the nucleus. Its function is as follows. Transcription factor. Efficient DNA binding requires dimerization with another bHLH protein, such as cky-1 or ahr-1. Regulates transcription of target genes, probably acting in complex with cky-1. Has a role in cellular differentiation. Required for pharyngeal development. In collaboration with ahr-1 it is involved in RMEL/R and SDQR neuron cell migration. Acts in the cellular response to hypoxia. Involved in aggregation behavior by regulating soluble guanylate cyclase gene expression in the URX neurons. The chain is Aryl hydrocarbon receptor nuclear translocator homolog from Caenorhabditis elegans.